A 300-amino-acid chain; its full sequence is UDP-N-acetylenolpyruvoylglucosamine reductase (300 aa).

The FAD-binding PCMH-type domain occupies 30–194; sequence KVGGAADFFV…VGATFRLDPA (165 aa). The active site involves Arg174. Ser223 functions as the Proton donor in the catalytic mechanism. Glu293 is an active-site residue.

The protein belongs to the MurB family. The cofactor is FAD.

The protein localises to the cytoplasm. It catalyses the reaction UDP-N-acetyl-alpha-D-muramate + NADP(+) = UDP-N-acetyl-3-O-(1-carboxyvinyl)-alpha-D-glucosamine + NADPH + H(+). The protein operates within cell wall biogenesis; peptidoglycan biosynthesis. Cell wall formation. The sequence is that of UDP-N-acetylenolpyruvoylglucosamine reductase from Geobacter metallireducens (strain ATCC 53774 / DSM 7210 / GS-15).